The sequence spans 391 residues: Galactokinase (391 aa).

34–37 contacts substrate; sequence EHTD. 121-127 contributes to the ATP binding site; sequence GAGLSSS. The Mg(2+) site is built by Ser127 and Glu159. Catalysis depends on Asp171, which acts as the Proton acceptor. Tyr220 provides a ligand contact to substrate.

It belongs to the GHMP kinase family. GalK subfamily.

It is found in the cytoplasm. The enzyme catalyses alpha-D-galactose + ATP = alpha-D-galactose 1-phosphate + ADP + H(+). It functions in the pathway carbohydrate metabolism; galactose metabolism. In terms of biological role, catalyzes the transfer of the gamma-phosphate of ATP to D-galactose to form alpha-D-galactose-1-phosphate (Gal-1-P). This Roseiflexus sp. (strain RS-1) protein is Galactokinase.